Here is an 882-residue protein sequence, read N- to C-terminus: E3 ubiquitin-protein ligase SH3RF3 (882 aa).

Residues 18–42 (AQSEGDEDRPGERRRRRAAATAAGA) form a disordered region. Residues 57–98 (CSVCLERLDTTAKVLPCQHTFCRRCLESIVCSRHELRCPECR) form an RING-type zinc finger. Residues 124-159 (RPRAGTSPGGSPPARPIPGQSAAPTLAGGGGGAAGS) form a disordered region. SH3 domains are found at residues 194 to 253 (CLLP…CIQP) and 256 to 319 (HAPP…LNDS). Residues 368-399 (RRVDGKKNTKKRHSFTALSVTHRSSQAASHRH) are disordered. Residues 369 to 439 (RVDGKKNTKK…APTQDVSSSA (71 aa)) form an interaction with RAC1 region. Ser-400 carries the post-translational modification Phosphoserine. The span at 433–444 (QDVSSSAGSTPT) shows a compositional bias: polar residues. The disordered stretch occupies residues 433–458 (QDVSSSAGSTPTAVPRAASVSGEQGT). The region spanning 464–525 (LPLNVYLALY…PGNYVTPVSR (62 aa)) is the SH3 3 domain. Composition is skewed to polar residues over residues 575-588 (PQAHAQHPTASPPT), 596-635 (AQPTASQARSTISTAAHSAAQAQDRPTATVSPLRTQNSPS), and 697-706 (LSTSSPTNTG). Disordered stretches follow at residues 575-664 (PQAH…CPRP) and 693-747 (PIGV…PTHD). Residues 708-721 (KLDEKKSEKKEKKS) are compositionally biased toward basic and acidic residues. Ser-797 carries the phosphoserine modification. One can recognise an SH3 4 domain in the interval 823–882 (LPRERYRVVVSYPPQSEAEIELKEGDIVFVHKKREDGWYKGTLQRNGRTGLFPGSFVESF).

This sequence belongs to the SH3RF family. As to quaternary structure, interacts (via SH3 domain 3) with PAK2. Interacts with RAC1 (GTP-bound form). In terms of processing, autoubiquitinated.

It carries out the reaction S-ubiquitinyl-[E2 ubiquitin-conjugating enzyme]-L-cysteine + [acceptor protein]-L-lysine = [E2 ubiquitin-conjugating enzyme]-L-cysteine + N(6)-ubiquitinyl-[acceptor protein]-L-lysine.. It participates in protein modification; protein ubiquitination. Its function is as follows. Has E3 ubiquitin-protein ligase activity. The polypeptide is E3 ubiquitin-protein ligase SH3RF3 (SH3RF3) (Homo sapiens (Human)).